A 626-amino-acid polypeptide reads, in one-letter code: Membrane protein insertase YidC (626 aa).

Transmembrane regions (helical) follow at residues 8-28, 399-419, 469-489, 527-547, and 563-583; these read LILA…LFPP, MGLA…PLAY, LPIL…FVTL, SIMA…SMWL, and IFAW…SGLL.

It belongs to the OXA1/ALB3/YidC family. Type 1 subfamily. In terms of assembly, interacts with the Sec translocase complex via SecD. Specifically interacts with transmembrane segments of nascent integral membrane proteins during membrane integration.

The protein resides in the cell inner membrane. Functionally, required for the insertion and/or proper folding and/or complex formation of integral membrane proteins into the membrane. Involved in integration of membrane proteins that insert both dependently and independently of the Sec translocase complex, as well as at least some lipoproteins. Aids folding of multispanning membrane proteins. This chain is Membrane protein insertase YidC, found in Jannaschia sp. (strain CCS1).